We begin with the raw amino-acid sequence, 336 residues long: Ribosomal RNA large subunit methyltransferase F (336 aa).

Residues 212-231 (HHLERSRGKPTGKGVRRVRS) are compositionally biased toward basic residues. Positions 212–234 (HHLERSRGKPTGKGVRRVRSGRM) are disordered.

Belongs to the methyltransferase superfamily. METTL16/RlmF family.

It is found in the cytoplasm. The enzyme catalyses adenosine(1618) in 23S rRNA + S-adenosyl-L-methionine = N(6)-methyladenosine(1618) in 23S rRNA + S-adenosyl-L-homocysteine + H(+). Functionally, specifically methylates the adenine in position 1618 of 23S rRNA. The sequence is that of Ribosomal RNA large subunit methyltransferase F from Methylobacillus flagellatus (strain ATCC 51484 / DSM 6875 / VKM B-1610 / KT).